The primary structure comprises 637 residues: Biosynthetic arginine decarboxylase (637 aa).

Lys-101 is subject to N6-(pyridoxal phosphate)lysine. 286–296 lines the substrate pocket; the sequence is VDIGGGLGVDY.

Belongs to the Orn/Lys/Arg decarboxylase class-II family. SpeA subfamily. It depends on Mg(2+) as a cofactor. Pyridoxal 5'-phosphate serves as cofactor.

The catalysed reaction is L-arginine + H(+) = agmatine + CO2. It functions in the pathway amine and polyamine biosynthesis; agmatine biosynthesis; agmatine from L-arginine: step 1/1. Functionally, catalyzes the biosynthesis of agmatine from arginine. The protein is Biosynthetic arginine decarboxylase of Marinobacter nauticus (strain ATCC 700491 / DSM 11845 / VT8) (Marinobacter aquaeolei).